Here is a 300-residue protein sequence, read N- to C-terminus: Zinc finger protein RME1 (300 aa).

Residues 80–90 (QAYDSTSSTEE) show a composition bias toward polar residues. The tract at residues 80-100 (QAYDSTSSTEEGTAPQLRPDE) is disordered. C2H2-type zinc fingers lie at residues 178-199 (YHCS…HLDE), 206-234 (CKCP…ASQH), and 256-281 (LNCP…AMVH).

It is found in the nucleus. Its function is as follows. Involved in the control of meiosis. Represses the transcription of the IME1 gene thereby inhibiting cells from entering meiosis. But also activates the CLN2 gene thus promoting mitosis. The chain is Zinc finger protein RME1 (RME1) from Saccharomyces cerevisiae (strain ATCC 204508 / S288c) (Baker's yeast).